Reading from the N-terminus, the 319-residue chain is High mobility group B protein 10 (319 aa).

Residues 1–13 (MSTDISPPYSQTH) are compositionally biased toward polar residues. The tract at residues 1–25 (MSTDISPPYSQTHVEPVNGYPSDNK) is disordered. One can recognise an ARID domain in the interval 40–131 (VRNSALFWEK…FLFQLEHVYY (92 aa)). A compositionally biased stretch (polar residues) spans 203 to 220 (PSQSQQTMETPSAIVQSS). The tract at residues 203 to 230 (PSQSQQTMETPSAIVQSSQRRHRKKSKL) is disordered. Residues 238-305 (PKCHRSGYNF…RYRIEMLEYK (68 aa)) constitute a DNA-binding region (HMG box).

In terms of tissue distribution, ubiquitously expressed.

It localises to the nucleus. Functionally, binds preferentially DNA with A/T-rich content. This chain is High mobility group B protein 10 (HMGB10), found in Arabidopsis thaliana (Mouse-ear cress).